A 67-amino-acid chain; its full sequence is DNA-directed RNA polymerase subunit omega (67 aa).

The protein belongs to the RNA polymerase subunit omega family. As to quaternary structure, the RNAP catalytic core consists of 2 alpha, 1 beta, 1 beta' and 1 omega subunit. When a sigma factor is associated with the core the holoenzyme is formed, which can initiate transcription.

It carries out the reaction RNA(n) + a ribonucleoside 5'-triphosphate = RNA(n+1) + diphosphate. In terms of biological role, promotes RNA polymerase assembly. Latches the N- and C-terminal regions of the beta' subunit thereby facilitating its interaction with the beta and alpha subunits. The protein is DNA-directed RNA polymerase subunit omega of Nitrosomonas eutropha (strain DSM 101675 / C91 / Nm57).